We begin with the raw amino-acid sequence, 288 residues long: Rhox homeobox family member 2 (288 aa).

Residues 16 to 136 are disordered; the sequence is SPAVDDEKEL…GLEPGNAQQP (121 aa). The segment covering 39–48 has biased composition (acidic residues); sequence VKEEEEDAQP. Positions 68 to 80 are enriched in basic and acidic residues; it reads GEEKDGGGEEKDG. The homeobox DNA-binding region spans 134–193; sequence QQPNVHAFTPLQLQELERIFQREQFPSEFLRRRLARSMNVTELAVQIWFENRRAKWRRHQ. The Nuclear localization signal motif lies at 186–195; sequence RAKWRRHQRA.

This sequence belongs to the paired-like homeobox family. PEPP subfamily. Testis. Not detected in epididymis nor placenta. In testis, mainly expressed in germ cells, but also detected in somatic cells such as Sertoli cells, Leydig cells and peritubular cells.

The protein resides in the nucleus. In terms of biological role, transcription factor maybe involved in reproductive processes. Modulates expression of target genes encoding proteins involved in processes relevant to spermatogenesis. This chain is Rhox homeobox family member 2, found in Homo sapiens (Human).